The primary structure comprises 419 residues: Synaptotagmin-1 (419 aa).

The Vesicular segment spans residues 1 to 58; sequence MVSESHHEALAAPPVTTVATVLPSNATEPASPGEGKEDAFSKLKEKFMNELHKIPLPP. N-linked (GlcNAc...) asparagine glycosylation is present at asparagine 25. A helical membrane pass occupies residues 59 to 80; it reads WALIAIAIVAVLLVLTCCFCIC. S-palmitoyl cysteine attachment occurs at residues cysteine 75, cysteine 76, cysteine 78, cysteine 80, and cysteine 83. Residues 81 to 419 are Cytoplasmic-facing; the sequence is KKCLFKKKNK…EVDAMLAVKK (339 aa). The disordered stretch occupies residues 108–139; that stretch reads KDLGKTMKDQDDDAETGLTDGEEKEEPKEEEK. Positions 117-131 are enriched in acidic residues; it reads QDDDAETGLTDGEEK. Position 126 is a phosphothreonine (threonine 126). The tract at residues 133–379 is phospholipid binding; it reads EPKEEEKLGK…AIGKVFVGYN (247 aa). Residues 139–258 form the C2 1 domain; it reads KLGKLQYSLD…DFGHVTEEWR (120 aa). Ca(2+) is bound by residues leucine 169, aspartate 170, and aspartate 176. At tyrosine 227 the chain carries Phosphotyrosine. Ca(2+) is bound by residues aspartate 228, phenylalanine 229, aspartate 230, serine 233, lysine 234, and aspartate 236. Serine 262 bears the Phosphoserine mark. Positions 270–403 constitute a C2 2 domain; sequence KLGDICFSLR…NPRRPIAQWH (134 aa). Ca(2+)-binding residues include aspartate 301 and aspartate 307. Residues serine 340 and serine 342 each carry the phosphoserine modification. Ca(2+)-binding residues include aspartate 361, aspartate 363, and aspartate 369.

Belongs to the synaptotagmin family. Homotetramer. Heterodimer; heterodimerizes with SYT2 in presence of calcium. Interacts with SCAMP5. Interacts with STON2. Forms a complex with SV2B, syntaxin 1 and SNAP25. Interacts with SV2A, SV2B and SV2C. Interacts with RIMS1. Interacts with PRRT2. Interacts with DNAJC5 in a phosphorylation-dependent manner. Interacts (via N-terminus) with RAB3A. Interacts with SYT12. Interacts with calmodulin. Interacts with DNM1 (via C-terminal proline-rich domain (PRD)); this interaction facilitates vesicle fission during clathrin-mediated endocytosis (CME). Ca(2+) serves as cofactor. In terms of processing, glycosylated.

It is found in the cytoplasmic vesicle. The protein resides in the secretory vesicle membrane. It localises to the secretory vesicle. Its subcellular location is the synaptic vesicle membrane. The protein localises to the chromaffin granule membrane. It is found in the cytoplasm. Functionally, calcium sensor that participates in triggering neurotransmitter release at the synapse. May have a regulatory role in the membrane interactions during trafficking of synaptic vesicles at the active zone of the synapse. It binds acidic phospholipids with a specificity that requires the presence of both an acidic head group and a diacyl backbone. A Ca(2+)-dependent interaction between synaptotagmin and putative receptors for activated protein kinase C has also been reported. It can bind to at least three additional proteins in a Ca(2+)-independent manner; these are neurexins, syntaxin and AP2. Plays a role in dendrite formation by melanocytes. This Pongo abelii (Sumatran orangutan) protein is Synaptotagmin-1.